The primary structure comprises 222 residues: CEACAM1-like protein UL7 (222 aa).

12 N-linked (GlcNAc...) asparagine; by host glycosylation sites follow: N50, N56, N60, N71, N105, N109, N125, N132, N147, N164, N168, and N189. The helical transmembrane segment at 193–213 (LALVGVIVFIALIVVCIMGWW) threads the bilayer.

This sequence belongs to the RL11 family. Interacts with host FLT3. In terms of processing, highly glycosylated.

It is found in the secreted. Its subcellular location is the host cell membrane. Plays a role in modulating the host immune response and affecting host cytokine production. Structurally and functionally homolog of host CEACAM1, induces endothelial cell angiogenesis. Ligands for host FLT3 receptor, activates the PI3K/AKT and MAPK/ERK pathways. In turn, triggers hematopoietic progenitor cell and monocyte differentiation leading to virus reactivation. This Human cytomegalovirus (strain AD169) (HHV-5) protein is CEACAM1-like protein UL7 (UL7).